Reading from the N-terminus, the 348-residue chain is Protein RecA (348 aa).

An ATP-binding site is contributed by 64 to 71 (GPESSGKT). Positions 328–348 (DTGGAAPAQEDEAQAQEELEF) are disordered. The span at 336 to 348 (QEDEAQAQEELEF) shows a compositional bias: acidic residues.

Belongs to the RecA family.

The protein resides in the cytoplasm. Functionally, can catalyze the hydrolysis of ATP in the presence of single-stranded DNA, the ATP-dependent uptake of single-stranded DNA by duplex DNA, and the ATP-dependent hybridization of homologous single-stranded DNAs. It interacts with LexA causing its activation and leading to its autocatalytic cleavage. This chain is Protein RecA, found in Bacillus licheniformis (strain ATCC 14580 / DSM 13 / JCM 2505 / CCUG 7422 / NBRC 12200 / NCIMB 9375 / NCTC 10341 / NRRL NRS-1264 / Gibson 46).